Here is a 633-residue protein sequence, read N- to C-terminus: Phosphomethylpyrimidine synthase (633 aa).

Substrate-binding positions include Asn-245, Met-274, Tyr-303, His-339, 359-361 (SRG), 400-403 (DGLR), and Glu-439. His-443 is a Zn(2+) binding site. Tyr-466 lines the substrate pocket. Residue His-507 coordinates Zn(2+). Cys-587, Cys-590, and Cys-595 together coordinate [4Fe-4S] cluster.

Belongs to the ThiC family. In terms of assembly, homodimer. The cofactor is [4Fe-4S] cluster.

The enzyme catalyses 5-amino-1-(5-phospho-beta-D-ribosyl)imidazole + S-adenosyl-L-methionine = 4-amino-2-methyl-5-(phosphooxymethyl)pyrimidine + CO + 5'-deoxyadenosine + formate + L-methionine + 3 H(+). Its pathway is cofactor biosynthesis; thiamine diphosphate biosynthesis. Catalyzes the synthesis of the hydroxymethylpyrimidine phosphate (HMP-P) moiety of thiamine from aminoimidazole ribotide (AIR) in a radical S-adenosyl-L-methionine (SAM)-dependent reaction. The polypeptide is Phosphomethylpyrimidine synthase (Neisseria meningitidis serogroup A / serotype 4A (strain DSM 15465 / Z2491)).